Reading from the N-terminus, the 501-residue chain is Tegument protein US24 (501 aa).

The protein belongs to the herpesviridae US22 family.

It localises to the virion tegument. This chain is Tegument protein US24 (US24), found in Human cytomegalovirus (strain AD169) (HHV-5).